The primary structure comprises 165 residues: Large ribosomal subunit protein uL10 (165 aa).

It belongs to the universal ribosomal protein uL10 family. Part of the ribosomal stalk of the 50S ribosomal subunit. The N-terminus interacts with L11 and the large rRNA to form the base of the stalk. The C-terminus forms an elongated spine to which L12 dimers bind in a sequential fashion forming a multimeric L10(L12)X complex.

Its function is as follows. Forms part of the ribosomal stalk, playing a central role in the interaction of the ribosome with GTP-bound translation factors. The polypeptide is Large ribosomal subunit protein uL10 (Citrobacter koseri (strain ATCC BAA-895 / CDC 4225-83 / SGSC4696)).